Reading from the N-terminus, the 210-residue chain is Large ribosomal subunit protein uL3 (210 aa).

Positions 123 to 144 are disordered; that stretch reads KRHGQSRGPMAHGSRYHRRPGS.

Belongs to the universal ribosomal protein uL3 family. As to quaternary structure, part of the 50S ribosomal subunit. Forms a cluster with proteins L14 and L19.

One of the primary rRNA binding proteins, it binds directly near the 3'-end of the 23S rRNA, where it nucleates assembly of the 50S subunit. This is Large ribosomal subunit protein uL3 from Alkaliphilus metalliredigens (strain QYMF).